The sequence spans 383 residues: tRNA-specific 2-thiouridylase MnmA (383 aa).

Residues Gly30 to Ser37 and Leu56 contribute to the ATP site. The active-site Nucleophile is Cys117. Cys117 and Cys216 are disulfide-bonded. Gly142 is a binding site for ATP. Residues Lys166–Gln168 form an interaction with tRNA region. Cys216 acts as the Cysteine persulfide intermediate in catalysis. Positions Arg321–Tyr322 are interaction with tRNA.

It belongs to the MnmA/TRMU family.

The protein localises to the cytoplasm. The catalysed reaction is S-sulfanyl-L-cysteinyl-[protein] + uridine(34) in tRNA + AH2 + ATP = 2-thiouridine(34) in tRNA + L-cysteinyl-[protein] + A + AMP + diphosphate + H(+). Functionally, catalyzes the 2-thiolation of uridine at the wobble position (U34) of tRNA, leading to the formation of s(2)U34. This chain is tRNA-specific 2-thiouridylase MnmA, found in Synechococcus sp. (strain CC9605).